Consider the following 157-residue polypeptide: Protein-export protein SecB (157 aa).

Belongs to the SecB family. In terms of assembly, homotetramer, a dimer of dimers. One homotetramer interacts with 1 SecA dimer.

It is found in the cytoplasm. Its function is as follows. One of the proteins required for the normal export of preproteins out of the cell cytoplasm. It is a molecular chaperone that binds to a subset of precursor proteins, maintaining them in a translocation-competent state. It also specifically binds to its receptor SecA. This Magnetococcus marinus (strain ATCC BAA-1437 / JCM 17883 / MC-1) protein is Protein-export protein SecB.